The sequence spans 94 residues: DNA-directed RNA polymerase subunit omega (94 aa).

It belongs to the RNA polymerase subunit omega family. As to quaternary structure, the RNAP catalytic core consists of 2 alpha, 1 beta, 1 beta' and 1 omega subunit. When a sigma factor is associated with the core the holoenzyme is formed, which can initiate transcription.

It catalyses the reaction RNA(n) + a ribonucleoside 5'-triphosphate = RNA(n+1) + diphosphate. In terms of biological role, promotes RNA polymerase assembly. Latches the N- and C-terminal regions of the beta' subunit thereby facilitating its interaction with the beta and alpha subunits. The chain is DNA-directed RNA polymerase subunit omega from Bifidobacterium animalis subsp. lactis (strain AD011).